The following is a 618-amino-acid chain: C2H2 finger domain transcription factor sebA (618 aa).

Residues 394–488 (GDATQSTEEM…RGRKQSLTDD (95 aa)) are disordered. The segment covering 406-416 (KKRVTSRRSLK) has biased composition (basic residues). Composition is skewed to low complexity over residues 417–432 (KAST…AKKT) and 443–458 (SDTT…SSRQ). Residues 459–469 (NSTANTSNSES) are compositionally biased toward polar residues. 2 C2H2-type zinc fingers span residues 493 to 516 (FVCS…RSLH) and 522 to 544 (FECH…ARTH). The span at 582-597 (NAATSKSTTSESSDGT) shows a compositional bias: low complexity. Positions 582–618 (NAATSKSTTSESSDGTISDTSSVGGRPAKKRRRDDHV) are disordered. Basic residues predominate over residues 608–618 (PAKKRRRDDHV).

Its subcellular location is the nucleus. It is found in the cytoplasm. Its function is as follows. Transcription factor that is involved in the response to heat shock, oxidative stress, and poor nutrient conditions. Controls expression of oxidative stress response genes such as ccp1, cat1, cat2, sod2; as well as of heat shock genes such as hsf1, hsp30 and hsp90. Negatively controls the expression of the fumiquinazoline (fmq) cluster via binding to the STRE motifs at the fmqA-D promoters. Plays a role in virulence. In Aspergillus fumigatus (strain ATCC MYA-4609 / CBS 101355 / FGSC A1100 / Af293) (Neosartorya fumigata), this protein is C2H2 finger domain transcription factor sebA.